A 243-amino-acid chain; its full sequence is Probable transcriptional regulatory protein BP2308 (243 aa).

The tract at residues 1–21 (MAGHSKWANIQHRKGRQDAKR) is disordered.

It belongs to the TACO1 family.

Its subcellular location is the cytoplasm. The sequence is that of Probable transcriptional regulatory protein BP2308 from Bordetella pertussis (strain Tohama I / ATCC BAA-589 / NCTC 13251).